The chain runs to 190 residues: Peptidyl-tRNA hydrolase (190 aa).

Position 14 (Tyr14) interacts with tRNA. The active-site Proton acceptor is the His19. TRNA contacts are provided by Tyr64, Asn66, and Asn113.

Belongs to the PTH family. Monomer.

It localises to the cytoplasm. It catalyses the reaction an N-acyl-L-alpha-aminoacyl-tRNA + H2O = an N-acyl-L-amino acid + a tRNA + H(+). Functionally, hydrolyzes ribosome-free peptidyl-tRNAs (with 1 or more amino acids incorporated), which drop off the ribosome during protein synthesis, or as a result of ribosome stalling. Its function is as follows. Catalyzes the release of premature peptidyl moieties from peptidyl-tRNA molecules trapped in stalled 50S ribosomal subunits, and thus maintains levels of free tRNAs and 50S ribosomes. The protein is Peptidyl-tRNA hydrolase of Gemmatimonas aurantiaca (strain DSM 14586 / JCM 11422 / NBRC 100505 / T-27).